The following is a 453-amino-acid chain: Carbamoyl phosphate synthase arginine-specific small chain (453 aa).

Residues Met1–Met28 constitute a mitochondrion transit peptide. A Glutamine amidotransferase type-1 domain is found at His219–Ser406. The active-site Nucleophile is Cys295. Active-site residues include His379 and Glu381.

It belongs to the CarA family. In terms of assembly, heterodimer composed of 2 chains; the small (or glutamine) chain promotes the hydrolysis of glutamine to ammonia, which is used by the large (or ammonia) chain to synthesize carbamoyl phosphate.

It localises to the mitochondrion matrix. The enzyme catalyses hydrogencarbonate + L-glutamine + 2 ATP + H2O = carbamoyl phosphate + L-glutamate + 2 ADP + phosphate + 2 H(+). The catalysed reaction is L-glutamine + H2O = L-glutamate + NH4(+). It functions in the pathway amino-acid biosynthesis; L-arginine biosynthesis; carbamoyl phosphate from bicarbonate: step 1/1. Functionally, small subunit of the arginine-specific carbamoyl phosphate synthase (CPSase). CPSase catalyzes the formation of carbamoyl phosphate from the ammonia moiety of glutamine, carbonate, and phosphate donated by ATP, the first step of the arginine biosynthetic pathway. The small subunit (glutamine amidotransferase) binds and cleaves glutamine to supply the large subunit with the substrate ammonia. This is Carbamoyl phosphate synthase arginine-specific small chain (cpa1) from Aspergillus fumigatus (strain ATCC MYA-4609 / CBS 101355 / FGSC A1100 / Af293) (Neosartorya fumigata).